A 328-amino-acid polypeptide reads, in one-letter code: Phenylalanine--tRNA ligase alpha subunit (328 aa).

This sequence belongs to the class-II aminoacyl-tRNA synthetase family. Phe-tRNA synthetase alpha subunit type 1 subfamily. As to quaternary structure, tetramer of two alpha and two beta subunits. Mg(2+) serves as cofactor.

It localises to the cytoplasm. The enzyme catalyses tRNA(Phe) + L-phenylalanine + ATP = L-phenylalanyl-tRNA(Phe) + AMP + diphosphate + H(+). This chain is Phenylalanine--tRNA ligase alpha subunit, found in Buchnera aphidicola subsp. Baizongia pistaciae (strain Bp).